Consider the following 198-residue polypeptide: Syndecan-4 (198 aa).

The N-terminal stretch at methionine 1–glycine 23 is a signal peptide. Topologically, residues glutamate 24–glutamate 145 are extracellular. Disordered stretches follow at residues tyrosine 42–phenylalanine 76 and alanine 94–serine 130. 3 O-linked (Xyl...) (glycosaminoglycan) serine glycosylation sites follow: serine 44, serine 62, and serine 64. Residues proline 48–glutamate 71 are compositionally biased toward acidic residues. Positions serine 102–proline 118 are enriched in basic and acidic residues. Residues valine 146–tyrosine 170 form a helical membrane-spanning segment. Residues arginine 171–alanine 198 lie on the Cytoplasmic side of the membrane.

The protein belongs to the syndecan proteoglycan family. As to quaternary structure, homodimer. Interacts with CDCP1 and SDCBP. Interacts (via its cytoplasmic domain) with GIPC (via its PDZ domain). Interacts (via its cytoplasmic domain) with NUDT16L1. Interacts with DNM2; this interaction is markedly enhanced at focal ahesion site upon induction of focal adhesions and stress-fiber formation. Shedding is enhanced by a number of factors such as heparanase, thrombin or EGF. Also by stress and wound healing. PMA-mediated shedding is inhibited by TIMP3. In terms of processing, O-glycosylated; contains both chondroitin sulfate and heparan sulfate. Ser-44, Ser-62 and Ser-64 can all be modified by either chondroitin sulfate or heparan sulfate, and the protein exists in forms that contain only chondroitin sulfate, only heparan sulfate and both chondroitin sulfate and heparan sulfate. Ubiquitous. Highest levels in liver, kidney and lung.

It is found in the membrane. The protein resides in the secreted. In terms of biological role, cell surface proteoglycan which regulates exosome biogenesis in concert with SDCBP and PDCD6IP. This is Syndecan-4 from Mus musculus (Mouse).